A 379-amino-acid polypeptide reads, in one-letter code: Queuine tRNA-ribosyltransferase (379 aa).

Catalysis depends on Asp-94, which acts as the Proton acceptor. Substrate-binding positions include 94 to 98 (DSGGF), Asp-148, Gln-191, and Gly-218. The RNA binding stretch occupies residues 249-255 (GVGSPDS). Catalysis depends on Asp-268, which acts as the Nucleophile. The RNA binding; important for wobble base 34 recognition stretch occupies residues 273–277 (TRIGR). Positions 306, 308, 311, and 337 each coordinate Zn(2+).

The protein belongs to the queuine tRNA-ribosyltransferase family. As to quaternary structure, homodimer. Within each dimer, one monomer is responsible for RNA recognition and catalysis, while the other monomer binds to the replacement base PreQ1. It depends on Zn(2+) as a cofactor.

It catalyses the reaction 7-aminomethyl-7-carbaguanine + guanosine(34) in tRNA = 7-aminomethyl-7-carbaguanosine(34) in tRNA + guanine. The protein operates within tRNA modification; tRNA-queuosine biosynthesis. Catalyzes the base-exchange of a guanine (G) residue with the queuine precursor 7-aminomethyl-7-deazaguanine (PreQ1) at position 34 (anticodon wobble position) in tRNAs with GU(N) anticodons (tRNA-Asp, -Asn, -His and -Tyr). Catalysis occurs through a double-displacement mechanism. The nucleophile active site attacks the C1' of nucleotide 34 to detach the guanine base from the RNA, forming a covalent enzyme-RNA intermediate. The proton acceptor active site deprotonates the incoming PreQ1, allowing a nucleophilic attack on the C1' of the ribose to form the product. After dissociation, two additional enzymatic reactions on the tRNA convert PreQ1 to queuine (Q), resulting in the hypermodified nucleoside queuosine (7-(((4,5-cis-dihydroxy-2-cyclopenten-1-yl)amino)methyl)-7-deazaguanosine). In Anoxybacillus flavithermus (strain DSM 21510 / WK1), this protein is Queuine tRNA-ribosyltransferase.